We begin with the raw amino-acid sequence, 119 residues long: Ribosome-binding factor A (119 aa).

This sequence belongs to the RbfA family. Monomer. Binds 30S ribosomal subunits, but not 50S ribosomal subunits or 70S ribosomes.

Its subcellular location is the cytoplasm. One of several proteins that assist in the late maturation steps of the functional core of the 30S ribosomal subunit. Associates with free 30S ribosomal subunits (but not with 30S subunits that are part of 70S ribosomes or polysomes). Required for efficient processing of 16S rRNA. May interact with the 5'-terminal helix region of 16S rRNA. This Chlorobium limicola (strain DSM 245 / NBRC 103803 / 6330) protein is Ribosome-binding factor A.